Reading from the N-terminus, the 225-residue chain is MTIKAILTDIEGTTSAVSFVFDVLFPYAARHLPDFVREHAGEPEVAAQLAAVRAESGEADADVERAIAILLQWIAEDRKATPLKALQGMVWAQGYRDGQLKGHVYPDAVQALREWKARGLDLYVYSSGSIQAQKLIFGCSEAGDLGPLFSGYFDTTSGPKRESASYARIAGAIGLPAAEILFLSDVVQELDAARDAGMRTLGLAREGGSLDGHPTVASFADIVVE.

The protein belongs to the HAD-like hydrolase superfamily. MasA/MtnC family. In terms of assembly, monomer. It depends on Mg(2+) as a cofactor.

It carries out the reaction 5-methylsulfanyl-2,3-dioxopentyl phosphate + H2O = 1,2-dihydroxy-5-(methylsulfanyl)pent-1-en-3-one + phosphate. Its pathway is amino-acid biosynthesis; L-methionine biosynthesis via salvage pathway; L-methionine from S-methyl-5-thio-alpha-D-ribose 1-phosphate: step 3/6. It functions in the pathway amino-acid biosynthesis; L-methionine biosynthesis via salvage pathway; L-methionine from S-methyl-5-thio-alpha-D-ribose 1-phosphate: step 4/6. Bifunctional enzyme that catalyzes the enolization of 2,3-diketo-5-methylthiopentyl-1-phosphate (DK-MTP-1-P) into the intermediate 2-hydroxy-3-keto-5-methylthiopentenyl-1-phosphate (HK-MTPenyl-1-P), which is then dephosphorylated to form the acireductone 1,2-dihydroxy-3-keto-5-methylthiopentene (DHK-MTPene). The sequence is that of Enolase-phosphatase E1 from Pseudomonas aeruginosa (strain UCBPP-PA14).